The primary structure comprises 275 residues: Protein rolling stone (275 aa).

The next 6 membrane-spanning stretches (helical) occupy residues 45-65 (LLYR…CVIV), 72-92 (FFIY…LISA), 127-147 (WLYN…WVFL), 162-182 (IITH…IAFP), 185-205 (ILHM…TLIY), and 232-252 (MVTF…LFGL).

In terms of tissue distribution, expressed in cells of the somatic mesoderm, most notably the muscle founder cells, between embryonic stages 12 and 14, in growing muscle fibers in dorsal, lateral and ventral positions. At stage 16 strongest expression is in some ventral muscles and muscle 8. At stages 16/17 expression is restricted to some cells of the CNS, the brain and the gonads.

It localises to the membrane. May have a central role in the fusion process during myogenesis, within the somatic mesoderm. The polypeptide is Protein rolling stone (rost) (Drosophila melanogaster (Fruit fly)).